Consider the following 220-residue polypeptide: Probable GTP-binding protein EngB (220 aa).

An EngB-type G domain is found at S23–I199. Mg(2+)-binding residues include S38 and T60.

This sequence belongs to the TRAFAC class TrmE-Era-EngA-EngB-Septin-like GTPase superfamily. EngB GTPase family. Mg(2+) serves as cofactor.

Functionally, necessary for normal cell division and for the maintenance of normal septation. The chain is Probable GTP-binding protein EngB from Dechloromonas aromatica (strain RCB).